The sequence spans 121 residues: Large ribosomal subunit protein bL12 (121 aa).

The protein belongs to the bacterial ribosomal protein bL12 family. Homodimer. Part of the ribosomal stalk of the 50S ribosomal subunit. Forms a multimeric L10(L12)X complex, where L10 forms an elongated spine to which 2 to 4 L12 dimers bind in a sequential fashion. Binds GTP-bound translation factors.

Forms part of the ribosomal stalk which helps the ribosome interact with GTP-bound translation factors. Is thus essential for accurate translation. The polypeptide is Large ribosomal subunit protein bL12 (Oenococcus oeni (strain ATCC BAA-331 / PSU-1)).